Reading from the N-terminus, the 356-residue chain is MDLVFRPERYPFLTQDLPGVGGEIRVEPEDFQVEEVPAYLPKGEGEHLYFLLEKEGRTTREVLEFLRDEVGVPEKEIGVAGLKDKRAKTRQWFSIPRKYEDALCLLENLQGVRLLAADLHTNKLRTGHLKGNRFHILIRRPKGGVAEAEAVLKRLAEKGVPNYYGPQRFGLGGLNPVRGYKLVKEGKGRGSPWLKRFLIGSLQSLLFNDWVALRMALGLYDRVVLGDWAKKHATGGEFLVEDPGEAERALRLEISATGPLFGKKYPEAQGEARAIEDEVLARYGLKREEFRARRGARRPIRVPLAEWKVEEAPEGLWLSFFLPKGSYATSLLREVMKVEALDHLEAEPAPEDAEGL.

Catalysis depends on Asp84, which acts as the Nucleophile. The TRUD domain occupies 159–302 (GVPNYYGPQR…RRGARRPIRV (144 aa)).

It belongs to the pseudouridine synthase TruD family.

It catalyses the reaction uridine(13) in tRNA = pseudouridine(13) in tRNA. Its function is as follows. Responsible for synthesis of pseudouridine from uracil-13 in transfer RNAs. This Thermus thermophilus (strain ATCC BAA-163 / DSM 7039 / HB27) protein is tRNA pseudouridine synthase D.